The chain runs to 177 residues: Mitochondrial inner membrane protease subunit 2 (177 aa).

A helical transmembrane segment spans residues 19-37; it reads FFVAVPVAVTFLDRVACVA. Residues serine 43 and lysine 91 contribute to the active site.

Belongs to the peptidase S26 family. IMP2 subfamily. Heterodimer of 2 subunits, IMMPL1 and IMMPL2.

It is found in the mitochondrion inner membrane. Its function is as follows. Catalyzes the removal of transit peptides required for the targeting of proteins from the mitochondrial matrix, across the inner membrane, into the inter-membrane space. Known to process the nuclear encoded protein DIABLO. The sequence is that of Mitochondrial inner membrane protease subunit 2 (IMMP2L) from Bos taurus (Bovine).